A 364-amino-acid polypeptide reads, in one-letter code: Dihydroorotate dehydrogenase (quinone) (364 aa).

FMN is bound by residues 61-65 (AGFDK) and Thr85. Lys65 serves as a coordination point for substrate. Residue 110 to 114 (NRMGF) coordinates substrate. The FMN site is built by Asn139 and Asn170. Asn170 lines the substrate pocket. Ser173 serves as the catalytic Nucleophile. Asn175 provides a ligand contact to substrate. Residues Lys214 and Ala242 each coordinate FMN. 243–244 (NT) provides a ligand contact to substrate. FMN contacts are provided by residues Gly266, Gly295, and 316-317 (YS).

Belongs to the dihydroorotate dehydrogenase family. Type 2 subfamily. Monomer. FMN serves as cofactor.

It localises to the cell membrane. It catalyses the reaction (S)-dihydroorotate + a quinone = orotate + a quinol. The protein operates within pyrimidine metabolism; UMP biosynthesis via de novo pathway; orotate from (S)-dihydroorotate (quinone route): step 1/1. In terms of biological role, catalyzes the conversion of dihydroorotate to orotate with quinone as electron acceptor. The polypeptide is Dihydroorotate dehydrogenase (quinone) (Rhodopseudomonas palustris (strain BisA53)).